We begin with the raw amino-acid sequence, 158 residues long: Crossover junction endodeoxyribonuclease RuvC (158 aa).

Catalysis depends on residues Asp7, Glu66, and Asp139. Mg(2+)-binding residues include Asp7, Glu66, and Asp139.

This sequence belongs to the RuvC family. Homodimer which binds Holliday junction (HJ) DNA. The HJ becomes 2-fold symmetrical on binding to RuvC with unstacked arms; it has a different conformation from HJ DNA in complex with RuvA. In the full resolvosome a probable DNA-RuvA(4)-RuvB(12)-RuvC(2) complex forms which resolves the HJ. Mg(2+) is required as a cofactor.

It is found in the cytoplasm. The catalysed reaction is Endonucleolytic cleavage at a junction such as a reciprocal single-stranded crossover between two homologous DNA duplexes (Holliday junction).. In terms of biological role, the RuvA-RuvB-RuvC complex processes Holliday junction (HJ) DNA during genetic recombination and DNA repair. Endonuclease that resolves HJ intermediates. Cleaves cruciform DNA by making single-stranded nicks across the HJ at symmetrical positions within the homologous arms, yielding a 5'-phosphate and a 3'-hydroxyl group; requires a central core of homology in the junction. The consensus cleavage sequence is 5'-(A/T)TT(C/G)-3'. Cleavage occurs on the 3'-side of the TT dinucleotide at the point of strand exchange. HJ branch migration catalyzed by RuvA-RuvB allows RuvC to scan DNA until it finds its consensus sequence, where it cleaves and resolves the cruciform DNA. The chain is Crossover junction endodeoxyribonuclease RuvC from Carboxydothermus hydrogenoformans (strain ATCC BAA-161 / DSM 6008 / Z-2901).